The sequence spans 489 residues: Protein translocase subunit SecY (489 aa).

The Cytoplasmic portion of the chain corresponds to 1–20 (MGWKDAAEPVLSRMPAVARP). A helical transmembrane segment spans residues 21–47 (EGHVPFRRKLGWTGGILVLYFFLTNVT). Residues 48-59 (LFGLDAATANDL) are Extracellular-facing. Positions 60–67 (FGQFRSIL) form an intramembrane region, helical. A discontinuously helical transmembrane segment spans residues 60 to 88 (FGQFRSILAGQQGSVLQLGIGPIVTASIV). An intramembrane segment occupies 68 to 79 (AGQQGSVLQLGI). The segment at residues 80-88 (GPIVTASIV) is an intramembrane region (helical). At 89-110 (LQLLGGADLLGLDTDNNPRDQV) the chain is on the cytoplasmic side. The chain crosses the membrane as a helical span at residues 111 to 135 (LYQGLQKLLVGVMICLTGLPMVFAG). Over 136–153 (NFLPADQAVATSLGIGTV) the chain is Extracellular. Residues 154–178 (GVKGLIFAQIAVGGVLILFMDEIVS) form a helical membrane-spanning segment. Residues 179–184 (KWGVGS) are Cytoplasmic-facing. The helical transmembrane segment at 185–203 (GVGLFIIAGVSQQLVGGLF) threads the bilayer. Residues 204–244 (SWQGLGGTSGFFATWIGIITGAIELPASPTDLLSTVFLGQG) are Extracellular-facing. The helical transmembrane segment at 245 to 266 (QLLALITTLLIFGIVVYAESVR) threads the bilayer. Residues 267–291 (VEIPLSHARVKGARGRFPVKLIYAS) lie on the Cytoplasmic side of the membrane. Residues 292 to 313 (VLPMILVRALQANIQFLGRFLN) traverse the membrane as a helical segment. Residues 314–364 (SSWVGMPAWLGQYTSGQVTGGLLYYLAPIQSRSDWMWFLGLTSADPLDIAI) lie on the Extracellular side of the membrane. The chain crosses the membrane as a helical span at residues 365-384 (RVLIDLIFMIVGGAVFAIFW). The Cytoplasmic segment spans residues 385 to 427 (VETTGMGPKSTAQQIQNSGMQIPGFRRNPQVIERVMERYIPQV). Residues 428-446 (TVIGGALVGLLAVMANMLG) form a helical membrane-spanning segment. At 447–450 (TIGA) the chain is on the extracellular side. The helical transmembrane segment at 451 to 465 (VSGTGLLLTVSITYK) threads the bilayer. At 466–488 (LYEEIAEEQLMEMHPMMRNMFGS) the chain is on the cytoplasmic side.

The protein belongs to the SecY/SEC61-alpha family. As to quaternary structure, component of the Sec protein translocase complex. Heterotrimer consisting of alpha (SecY), beta (SecG) and gamma (SecE) subunits. The heterotrimers can form oligomers, although 1 heterotrimer is thought to be able to translocate proteins. Interacts with the ribosome. May interact with SecDF, and other proteins may be involved.

The protein localises to the cell membrane. The central subunit of the protein translocation channel SecYEG. Consists of two halves formed by TMs 1-5 and 6-10. These two domains form a lateral gate at the front which open onto the bilayer between TMs 2 and 7, and are clamped together by SecE at the back. The channel is closed by both a pore ring composed of hydrophobic SecY resides and a short helix (helix 2A) on the extracellular side of the membrane which forms a plug. The plug probably moves laterally to allow the channel to open. The ring and the pore may move independently. This Haloferax volcanii (strain ATCC 29605 / DSM 3757 / JCM 8879 / NBRC 14742 / NCIMB 2012 / VKM B-1768 / DS2) (Halobacterium volcanii) protein is Protein translocase subunit SecY.